A 293-amino-acid chain; its full sequence is 33 kDa chaperonin (293 aa).

2 disulfide bridges follow: Cys229-Cys231 and Cys262-Cys265.

The protein belongs to the HSP33 family. In terms of processing, under oxidizing conditions two disulfide bonds are formed involving the reactive cysteines. Under reducing conditions zinc is bound to the reactive cysteines and the protein is inactive.

Its subcellular location is the cytoplasm. Its function is as follows. Redox regulated molecular chaperone. Protects both thermally unfolding and oxidatively damaged proteins from irreversible aggregation. Plays an important role in the bacterial defense system toward oxidative stress. In Methylobacillus flagellatus (strain ATCC 51484 / DSM 6875 / VKM B-1610 / KT), this protein is 33 kDa chaperonin.